Reading from the N-terminus, the 361-residue chain is Spermatogenesis-associated protein 17 (361 aa).

3 IQ domains span residues 32-61 (ENDA…IVTI), 55-84 (LNRI…VAYY), and 91-120 (YNAM…LKEY).

It localises to the cytoplasm. This Homo sapiens (Human) protein is Spermatogenesis-associated protein 17 (SPATA17).